A 315-amino-acid polypeptide reads, in one-letter code: Glycine--tRNA ligase alpha subunit (315 aa).

Belongs to the class-II aminoacyl-tRNA synthetase family. Tetramer of two alpha and two beta subunits.

It is found in the cytoplasm. The enzyme catalyses tRNA(Gly) + glycine + ATP = glycyl-tRNA(Gly) + AMP + diphosphate. The chain is Glycine--tRNA ligase alpha subunit from Pseudomonas putida (strain W619).